The sequence spans 911 residues: Protein translocase subunit SecA (911 aa).

Residues Q87, 105-109 (GEGKT), and D512 contribute to the ATP site. Positions 861–893 (APGLESEQLSEEGAEVAVASAPVRNDQKLGRNE) are disordered. Zn(2+) contacts are provided by C895, C897, C906, and H907.

It belongs to the SecA family. In terms of assembly, monomer and homodimer. Part of the essential Sec protein translocation apparatus which comprises SecA, SecYEG and auxiliary proteins SecDF-YajC and YidC. The cofactor is Zn(2+).

Its subcellular location is the cell inner membrane. It is found in the cytoplasm. The catalysed reaction is ATP + H2O + cellular proteinSide 1 = ADP + phosphate + cellular proteinSide 2.. Part of the Sec protein translocase complex. Interacts with the SecYEG preprotein conducting channel. Has a central role in coupling the hydrolysis of ATP to the transfer of proteins into and across the cell membrane, serving both as a receptor for the preprotein-SecB complex and as an ATP-driven molecular motor driving the stepwise translocation of polypeptide chains across the membrane. In Pseudomonas putida (strain ATCC 700007 / DSM 6899 / JCM 31910 / BCRC 17059 / LMG 24140 / F1), this protein is Protein translocase subunit SecA.